The following is a 288-amino-acid chain: uncharacterized protein (288 aa).

Positions 1 to 12 (MTEGRCAQHPDG) are enriched in basic and acidic residues. The disordered stretch occupies residues 1–20 (MTEGRCAQHPDGLDVQDVCD).

It belongs to the class IV-like SAM-binding methyltransferase superfamily. RNA methyltransferase TrmH family.

This is an uncharacterized protein from Mycobacterium bovis (strain ATCC BAA-935 / AF2122/97).